The sequence spans 909 residues: Protein NLP1 (909 aa).

Disordered stretches follow at residues 51-71 (KSLK…DNSP), 536-556 (KEDP…PVPN), 568-605 (ASTP…RAKT), and 690-745 (NSPN…ENTG). Polar residues predominate over residues 55-70 (QTEQSPSASTAMNDNS). The 82-residue stretch at 595 to 676 (RRPGEKKRAK…MDSVQGAQGS (82 aa)) folds into the RWP-RK domain. The segment covering 690-716 (NSPNMSSNGPSLKSNEQPSHLNAQTDN) has biased composition (polar residues). Residues 725 to 745 (RSPSSSCSKSSGSSNNNENTG) show a composition bias toward low complexity. In terms of domain architecture, PB1 spans 811 to 894 (AIKVKATFGE…HTIKISLNEA (84 aa)).

Its subcellular location is the nucleus. Its function is as follows. Probable transcription factor. This Arabidopsis thaliana (Mouse-ear cress) protein is Protein NLP1 (NLP1).